Reading from the N-terminus, the 241-residue chain is Triosephosphate isomerase (241 aa).

Substrate is bound at residue 9 to 11; it reads NWK. H96 serves as the catalytic Electrophile. E165 acts as the Proton acceptor in catalysis. Substrate-binding positions include G171, S204, and 225–226; that span reads GG.

It belongs to the triosephosphate isomerase family. As to quaternary structure, homodimer.

Its subcellular location is the cytoplasm. The catalysed reaction is D-glyceraldehyde 3-phosphate = dihydroxyacetone phosphate. Its pathway is carbohydrate biosynthesis; gluconeogenesis. The protein operates within carbohydrate degradation; glycolysis; D-glyceraldehyde 3-phosphate from glycerone phosphate: step 1/1. In terms of biological role, involved in the gluconeogenesis. Catalyzes stereospecifically the conversion of dihydroxyacetone phosphate (DHAP) to D-glyceraldehyde-3-phosphate (G3P). The polypeptide is Triosephosphate isomerase (Prochlorococcus marinus (strain MIT 9515)).